The following is a 508-amino-acid chain: tRNA(Ile2) 2-agmatinylcytidine synthetase TiaS (508 aa).

Positions 367 to 427 (ITGGHVLIEL…YQLNIEKINV (61 aa)) form a DNA-binding region, OB.

This sequence belongs to the TiaS family.

The protein resides in the cytoplasm. The catalysed reaction is cytidine(34) in tRNA(Ile2) + agmatine + ATP + H2O = 2-agmatinylcytidine(34) in tRNA(Ile2) + AMP + 2 phosphate + 2 H(+). In terms of biological role, ATP-dependent agmatine transferase that catalyzes the formation of 2-agmatinylcytidine (agm2C) at the wobble position (C34) of tRNA(Ile2), converting the codon specificity from AUG to AUA. In Methanococcus voltae (strain ATCC BAA-1334 / A3), this protein is tRNA(Ile2) 2-agmatinylcytidine synthetase TiaS.